A 216-amino-acid chain; its full sequence is Thiopurine S-methyltransferase (216 aa).

S-adenosyl-L-methionine is bound by residues W11, L46, E67, and R122.

This sequence belongs to the class I-like SAM-binding methyltransferase superfamily. TPMT family.

Its subcellular location is the cytoplasm. It carries out the reaction S-adenosyl-L-methionine + a thiopurine = S-adenosyl-L-homocysteine + a thiopurine S-methylether.. The chain is Thiopurine S-methyltransferase from Vibrio campbellii (strain ATCC BAA-1116).